Reading from the N-terminus, the 203-residue chain is Apoptosis-associated speck-like protein containing a CARD (203 aa).

In terms of domain architecture, Pyrin spans 1-91 (MAESFKEHLQ…DDLLRNTGQS (91 aa)). In terms of domain architecture, CARD spans 112–203 (VAFSKVNFID…FLMDDLEDAE (92 aa)).

As to quaternary structure, self-associates (via pyrin and CARD domains). Interacts (via pyrin domain) with caspa (via pyrin domain). Interacts with caspb; the interaction only occurs in the presence of nlrp1. Component of NLRP1 inflammasomes. Inflammasomes are supramolecular complexes that assemble in the cytosol in response to pathogens and other damage-associated signals and play critical roles in innate immunity and inflammation. The NLRP1 inflammasome is composed of the signal sensor nlrp1, and the adapter pycard (asc), which recruit effector pro-inflammatory caspases caspa and/or caspb. The interaction between nlrp1 and pycard is required for the sequential recruitment of caspa and then caspb. Within the complex caspa is preferentially recruited first and this causes the cleavage of pro-il1b into the midformed il1b. This is followed by the recruitment of caspb, which is activated and cleaves the midformed il1b resulting in il1b maturation. Interacts (via pyrin domain) with NLP3X1 (via pyrin domain). Interacts with gbp4. Expressed in the kidney, intestine and gill. Expressed at low levels in the heart.

It localises to the cytoplasm. Its subcellular location is the inflammasome. Functionally, functions as a key mediator in apoptosis and inflammation. Promotes caspase-mediated apoptosis. Induces proteolytic processing of caspa and caspa-dependent apoptosis. Involved in innate immune response by acting as an integral adapter in the assembly of various inflammasomes which recruit and activate caspase-1 leading to processing and secretion of pro-inflammatory cytokines. Caspase-1-dependent inflammation leads to macrophage pyroptosis, a form of cell death. The function as activating adapter in different types of inflammasomes is mediated by the pyrin and CARD domains and their homotypic interactions. Clustered PYCARD nucleates the formation of caspase-1 filaments through the interaction of their respective CARD domains, acting as a platform for of caspase-1 polymerization. Also involved in transcriptional activation of cytokines and chemokines independent of the inflammasome. The chain is Apoptosis-associated speck-like protein containing a CARD (pycard) from Danio rerio (Zebrafish).